Here is a 150-residue protein sequence, read N- to C-terminus: Ribonuclease K6 (150 aa).

Residues 1-23 form the signal peptide; it reads MVLCFPLLLLLLVLWGPVCPLHA. His-38 functions as the Proton acceptor in the catalytic mechanism. 4 cysteine pairs are disulfide-bonded: Cys-46–Cys-104, Cys-60–Cys-114, Cys-78–Cys-129, and Cys-85–Cys-92. Substrate contacts are provided by residues 61–65 and Lys-86; that span reads KHQNT. An N-linked (GlcNAc...) asparagine glycan is attached at Asn-100. Arg-105 serves as a coordination point for substrate. The active-site Proton donor is the His-145.

It belongs to the pancreatic ribonuclease family. As to quaternary structure, interacts (via N-terminus) with bacterial lipopolysaccharide (LPS).

It localises to the secreted. The protein localises to the lysosome. Its subcellular location is the cytoplasmic granule. Its function is as follows. Ribonuclease which shows a preference for the pyrimidines uridine and cytosine. Has potent antibacterial activity against a range of Gram-positive and Gram-negative bacteria, including P.aeruginosa, A.baumanii, M.luteus, S.aureus, E.faecalis, E.faecium, S.saprophyticus and E.coli. Causes loss of bacterial membrane integrity, and also promotes agglutination of Gram-negative bacteria. Probably contributes to urinary tract sterility. Bactericidal activity is independent of RNase activity. This Pan troglodytes (Chimpanzee) protein is Ribonuclease K6 (RNASE6).